Reading from the N-terminus, the 356-residue chain is MLSSILKKIQPSLLVNFRIITRTYATKEVTVRDAINSALDEELARDEKVFIMGEEVAQYNGAYKITKGLFDKYGGDRIIDTPITEAGFAGIGVGAAMAGTRPIIEFMTFNFAMQAIDHIINSSAKTHYMSGGKVFNPIVWRGPNGPPTAVGAQHSQCFAAWYGSVPGLKVVAPWSAADHRGLLKSAIRDDNPVVYLESELLYNYKFDLSDQEQDKEYLVPIGKAKVEREGKDVTIVGFSRIVSNCMEAAEILAKEGISAEVINLRTIRPIDAETIVNSLKKTNKLVTVEEGWAQSGIGAEISALMMEHAFDYLDAPIERICGADVPMPYASNLENAAMVQTQNIVNAAKRVTQRNK.

Residues 1–25 (MLSSILKKIQPSLLVNFRIITRTYA) constitute a mitochondrion transit peptide. E85 provides a ligand contact to thiamine diphosphate. Positions 138, 186, 187, 189, and 191 each coordinate K(+).

Tetramer of 2 alpha and 2 beta subunits. Thiamine diphosphate is required as a cofactor.

It is found in the mitochondrion matrix. The catalysed reaction is N(6)-[(R)-lipoyl]-L-lysyl-[protein] + pyruvate + H(+) = N(6)-[(R)-S(8)-acetyldihydrolipoyl]-L-lysyl-[protein] + CO2. In terms of biological role, the pyruvate dehydrogenase complex catalyzes the overall conversion of pyruvate to acetyl-CoA and CO(2). It contains multiple copies of three enzymatic components: pyruvate dehydrogenase (E1), dihydrolipoamide acetyltransferase (E2) and lipoamide dehydrogenase (E3). The polypeptide is Pyruvate dehydrogenase E1 component subunit beta, mitochondrial (pdhB) (Dictyostelium discoideum (Social amoeba)).